The following is a 1639-amino-acid chain: RIMS-binding protein 3B (1639 aa).

Disordered regions lie at residues 1-22 (MAKD…SSPA), 215-240 (GSPD…CHAP), and 295-364 (SLDS…LTPS). Residues 21 to 143 (PAAAVLENQR…ELQRQLAEEL (123 aa)) adopt a coiled-coil conformation. The segment covering 326-339 (SPPPSPLPPPPPPS) has biased composition (pro residues). Coiled-coil stretches lie at residues 409 to 442 (QADE…QETN) and 480 to 619 (LAKD…AEEN). Residues 697–811 (CRPGHPPEQP…DRDTASEVDD (115 aa)) form a disordered region. Polar residues-rich tracts occupy residues 707–718 (WETSQMPESQVK) and 761–775 (SVPQ…SQPL). Over residues 776–790 (SKKTSSQSNSSSEGS) the composition is skewed to low complexity. Residues 832–899 (PKLKIFMAQY…PSNFVEQIPD (68 aa)) form the SH3 1 domain. Fibronectin type-III domains are found at residues 995-1083 (APMQ…TLLA) and 1088-1184 (PPLE…IPED). 3 disordered regions span residues 1251 to 1273 (PRRQ…GAGS), 1292 to 1325 (QKSP…SPAP), and 1392 to 1413 (GTER…QALG). A compositionally biased stretch (polar residues) spans 1293-1305 (KSPQNHRPPSVSD). Basic and acidic residues predominate over residues 1392 to 1406 (GTERREERREPEPHS). 2 SH3 domains span residues 1452 to 1520 (TPAR…EMEV) and 1569 to 1636 (WTPK…HMSL).

It belongs to the RIMBP family. In terms of assembly, interacts with LRGUK (via guanylate kinase-like domain). Interacts (via C-terminus) with HOOK1 (via coiled-coil region).

Its subcellular location is the cytoplasm. It localises to the cytoskeleton. Probable component of the manchette, a microtubule-based structure which plays a key role in sperm head morphogenesis during late stages of sperm development. The chain is RIMS-binding protein 3B (RIMBP3B) from Homo sapiens (Human).